A 448-amino-acid polypeptide reads, in one-letter code: Probable glycine dehydrogenase (decarboxylating) subunit 1 (448 aa).

The protein belongs to the GcvP family. N-terminal subunit subfamily. The glycine cleavage system is composed of four proteins: P, T, L and H. In this organism, the P 'protein' is a heterodimer of two subunits.

It catalyses the reaction N(6)-[(R)-lipoyl]-L-lysyl-[glycine-cleavage complex H protein] + glycine + H(+) = N(6)-[(R)-S(8)-aminomethyldihydrolipoyl]-L-lysyl-[glycine-cleavage complex H protein] + CO2. Functionally, the glycine cleavage system catalyzes the degradation of glycine. The P protein binds the alpha-amino group of glycine through its pyridoxal phosphate cofactor; CO(2) is released and the remaining methylamine moiety is then transferred to the lipoamide cofactor of the H protein. In Lysinibacillus sphaericus (strain C3-41), this protein is Probable glycine dehydrogenase (decarboxylating) subunit 1.